Here is a 285-residue protein sequence, read N- to C-terminus: tRNA pseudouridine synthase B (285 aa).

The active-site Nucleophile is the D38.

The protein belongs to the pseudouridine synthase TruB family. Type 1 subfamily.

The enzyme catalyses uridine(55) in tRNA = pseudouridine(55) in tRNA. Its function is as follows. Responsible for synthesis of pseudouridine from uracil-55 in the psi GC loop of transfer RNAs. The protein is tRNA pseudouridine synthase B of Geobacillus kaustophilus (strain HTA426).